Here is a 97-residue protein sequence, read N- to C-terminus: Aspartyl/glutamyl-tRNA(Asn/Gln) amidotransferase subunit C (97 aa).

Belongs to the GatC family. As to quaternary structure, heterotrimer of A, B and C subunits.

The catalysed reaction is L-glutamyl-tRNA(Gln) + L-glutamine + ATP + H2O = L-glutaminyl-tRNA(Gln) + L-glutamate + ADP + phosphate + H(+). It carries out the reaction L-aspartyl-tRNA(Asn) + L-glutamine + ATP + H2O = L-asparaginyl-tRNA(Asn) + L-glutamate + ADP + phosphate + 2 H(+). In terms of biological role, allows the formation of correctly charged Asn-tRNA(Asn) or Gln-tRNA(Gln) through the transamidation of misacylated Asp-tRNA(Asn) or Glu-tRNA(Gln) in organisms which lack either or both of asparaginyl-tRNA or glutaminyl-tRNA synthetases. The reaction takes place in the presence of glutamine and ATP through an activated phospho-Asp-tRNA(Asn) or phospho-Glu-tRNA(Gln). This Synechococcus sp. (strain JA-2-3B'a(2-13)) (Cyanobacteria bacterium Yellowstone B-Prime) protein is Aspartyl/glutamyl-tRNA(Asn/Gln) amidotransferase subunit C.